Consider the following 360-residue polypeptide: 3-isopropylmalate dehydrogenase (360 aa).

Basic residues predominate over residues 66 to 75 (RCHPARRRRR). The tract at residues 66 to 101 (RCHPARRRRRSEMGRHRPGHPPGARPAENPFATGPV) is disordered. Arg-133 and Asp-223 together coordinate substrate. Mg(2+)-binding residues include Asp-223, Asp-247, and Asp-251.

The protein belongs to the isocitrate and isopropylmalate dehydrogenases family. LeuB type 1 subfamily. Homodimer. Requires Mg(2+) as cofactor. It depends on Mn(2+) as a cofactor.

It localises to the cytoplasm. It catalyses the reaction (2R,3S)-3-isopropylmalate + NAD(+) = 4-methyl-2-oxopentanoate + CO2 + NADH. It participates in amino-acid biosynthesis; L-leucine biosynthesis; L-leucine from 3-methyl-2-oxobutanoate: step 3/4. In terms of biological role, catalyzes the oxidation of 3-carboxy-2-hydroxy-4-methylpentanoate (3-isopropylmalate) to 3-carboxy-4-methyl-2-oxopentanoate. The product decarboxylates to 4-methyl-2 oxopentanoate. The protein is 3-isopropylmalate dehydrogenase (leuB) of Azotobacter vinelandii.